Reading from the N-terminus, the 351-residue chain is Heat-inducible transcription repressor HrcA (351 aa).

It belongs to the HrcA family.

Functionally, negative regulator of class I heat shock genes (grpE-dnaK-dnaJ and groELS operons). Prevents heat-shock induction of these operons. This is Heat-inducible transcription repressor HrcA from Clostridium tetani (strain Massachusetts / E88).